We begin with the raw amino-acid sequence, 439 residues long: Acyl transferase 4 (439 aa).

Residues H166 and D382 each act as proton acceptor in the active site.

It belongs to the plant acyltransferase family.

Functionally, grass-specific monolignol p-coumaroyl transferase involved in the biosynthesis of acylated monolignols or monolignol conjugates that serve as monomer precursors of lignin. Can synthesize sinapyl p-coumarate, p-coumaryl p-coumarate, sinapyl caffeate and p-coumaryl caffeate in vitro. The chain is Acyl transferase 4 from Oryza sativa subsp. japonica (Rice).